A 222-amino-acid chain; its full sequence is PKHD-type hydroxylase PCC8801_2196 (222 aa).

The region spanning 78–175 (RIHSLLFSRY…RLVVVGWIES (98 aa)) is the Fe2OG dioxygenase domain. The Fe cation site is built by H96, D98, and H156. A 2-oxoglutarate-binding site is contributed by R166.

Requires Fe(2+) as cofactor. The cofactor is L-ascorbate.

This Rippkaea orientalis (strain PCC 8801 / RF-1) (Cyanothece sp. (strain PCC 8801)) protein is PKHD-type hydroxylase PCC8801_2196.